We begin with the raw amino-acid sequence, 398 residues long: Probable beta-1,3-galactosyltransferase 5 (398 aa).

The chain crosses the membrane as a helical; Signal-anchor for type II membrane protein span at residues 11-31; it reads LTMTWVPLLCISCFFLGAIFT. N110, N115, and N206 each carry an N-linked (GlcNAc...) asparagine glycan.

This sequence belongs to the glycosyltransferase 31 family. Mn(2+) serves as cofactor.

The protein localises to the golgi apparatus membrane. Its pathway is protein modification; protein glycosylation. Functionally, beta-1,3-galactosyltransferase that transfers galactose from UDP-galactose to substrates with a terminal glycosyl residue. The polypeptide is Probable beta-1,3-galactosyltransferase 5 (B3GALT5) (Arabidopsis thaliana (Mouse-ear cress)).